The sequence spans 54 residues: Ribulose bisphosphate carboxylase large chain (54 aa).

A propeptide spanning residues 1–2 (MS) is cleaved from the precursor. P3 bears the N-acetylproline mark. N6,N6,N6-trimethyllysine is present on K14.

It belongs to the RuBisCO large chain family. Type I subfamily. Heterohexadecamer of 8 large chains and 8 small chains.

Its subcellular location is the plastid. It localises to the chloroplast. The enzyme catalyses 2 (2R)-3-phosphoglycerate + 2 H(+) = D-ribulose 1,5-bisphosphate + CO2 + H2O. It carries out the reaction D-ribulose 1,5-bisphosphate + O2 = 2-phosphoglycolate + (2R)-3-phosphoglycerate + 2 H(+). RuBisCO catalyzes two reactions: the carboxylation of D-ribulose 1,5-bisphosphate, the primary event in carbon dioxide fixation, as well as the oxidative fragmentation of the pentose substrate in the photorespiration process. Both reactions occur simultaneously and in competition at the same active site. This is Ribulose bisphosphate carboxylase large chain (rbcL) from Geum borisii (Avens).